The sequence spans 195 residues: Thioredoxin reductase-like selenoprotein T (195 aa).

The signal sequence occupies residues 1–19 (MRLLLLLLVAASAVVRSDA). Positions 46–49 (CVSU) form a cross-link, cysteinyl-selenocysteine (Cys-Sec). A non-standard amino acid (selenocysteine) is located at residue selenocysteine 49. A helical transmembrane segment spans residues 85 to 103 (IASFLSVFKLVLIGLIIVG).

The protein belongs to the SelWTH family. Selenoprotein T subfamily. Post-translationally, may contain a selenide-sulfide bond between Cys-46 and Sec-49. This bond is speculated to serve as redox-active pair.

The protein localises to the endoplasmic reticulum membrane. It catalyses the reaction [thioredoxin]-dithiol + NADP(+) = [thioredoxin]-disulfide + NADPH + H(+). Selenoprotein with thioredoxin reductase-like oxidoreductase activity. Protects dopaminergic neurons against oxidative stress and cell death. Involved in ADCYAP1/PACAP-induced calcium mobilization and neuroendocrine secretion. Plays a role in fibroblast anchorage and redox regulation. In gastric smooth muscle, modulates the contraction processes through the regulation of calcium release and MYLK activation. In pancreatic islets, involved in the control of glucose homeostasis, contributes to prolonged ADCYAP1/PACAP-induced insulin secretion. The chain is Thioredoxin reductase-like selenoprotein T from Bos taurus (Bovine).